The chain runs to 101 residues: Small ribosomal subunit protein uS10 (101 aa).

The protein belongs to the universal ribosomal protein uS10 family. As to quaternary structure, part of the 30S ribosomal subunit.

Functionally, involved in the binding of tRNA to the ribosomes. The polypeptide is Small ribosomal subunit protein uS10 (Amoebophilus asiaticus (strain 5a2)).